A 110-amino-acid chain; its full sequence is HTH-type transcriptional regulator TnrA (110 aa).

In terms of domain architecture, HTH merR-type spans 13–81 (VISIGIVSEL…TAEILKDMRK (69 aa)). A DNA-binding region (H-T-H motif) is located at residues 16–35 (IGIVSELTGLSVRQIRYYEE).

As to quaternary structure, homodimer. Under conditions of nitrogen excess, TnrA forms a stable complex with feedback-inhibited GlnA. Interacts with GlnK-AmtB complex.

It localises to the cell membrane. Under conditions of nitrogen excess, the DNA-binding activity is inhibited by the formation of a stable complex with feedback-inhibited GlnA. The presence of glutamine and AMP increases the inhibitory activity of glutamine synthetase by more than 1000-fold. Transcription regulator that actives the transcription of genes required for nitrogen assimilation such as nrgAB (ammonium transport), nasABCDEF (nitrate/nitrite assimilation), ureABC (urea degradation) and gabP (GABA transport), during nitrogen limitation. Also represses glnRA and gltAB in the absence of ammonium. On the contrary of the MerR members, which require longer DNA sites for high-affinity binding, TnrA requires a DNA sequence of 17 nucleotides as minimal binding site. The polypeptide is HTH-type transcriptional regulator TnrA (Bacillus subtilis (strain 168)).